We begin with the raw amino-acid sequence, 226 residues long: PKHD-type hydroxylase Nwi_0701 (226 aa).

The 101-residue stretch at 78–178 (KVLPPRFNRY…RLAAFFWTQS (101 aa)) folds into the Fe2OG dioxygenase domain. Fe cation is bound by residues His96, Asp98, and His159. Arg169 is a binding site for 2-oxoglutarate.

The cofactor is Fe(2+). L-ascorbate serves as cofactor.

The protein is PKHD-type hydroxylase Nwi_0701 of Nitrobacter winogradskyi (strain ATCC 25391 / DSM 10237 / CIP 104748 / NCIMB 11846 / Nb-255).